The sequence spans 119 residues: Large ribosomal subunit protein bL20 (119 aa).

It belongs to the bacterial ribosomal protein bL20 family.

Binds directly to 23S ribosomal RNA and is necessary for the in vitro assembly process of the 50S ribosomal subunit. It is not involved in the protein synthesizing functions of that subunit. This is Large ribosomal subunit protein bL20 from Polaromonas sp. (strain JS666 / ATCC BAA-500).